Consider the following 222-residue polypeptide: Glutathione S-transferase 3 (222 aa).

The GST N-terminal domain maps to 2–83; that stretch reads APLKLYGMPL…YIASKYASEG (82 aa). Residues Ser12, 13–14, 41–42, 54–55, and 67–68 each bind glutathione; these read PN, HK, QI, and ES. The region spanning 89–219 is the GST C-terminal domain; sequence ATASAAKLEV…AAIPLPPPPS (131 aa).

The protein belongs to the GST superfamily. Phi family. In terms of assembly, homodimer.

It carries out the reaction RX + glutathione = an S-substituted glutathione + a halide anion + H(+). In terms of biological role, conjugation of reduced glutathione to a wide number of exogenous and endogenous hydrophobic electrophiles. Involved in the detoxification of certain herbicides. The polypeptide is Glutathione S-transferase 3 (Zea mays (Maize)).